A 373-amino-acid chain; its full sequence is Transcription factor SPATULA (373 aa).

Over residues 1–21 (MISQREEREEKKQRVMGDKKL) the composition is skewed to basic and acidic residues. Disordered stretches follow at residues 1–46 (MISQ…PSSS) and 141–210 (VQGN…KRRR). The span at 141-160 (VQGNSSGTRVSSSSVGASGN) shows a compositional bias: low complexity. Residues 161 to 177 (ETDEYDCESEEGGEAVV) are compositionally biased toward acidic residues. Residues 182 to 191 (SSKSGPSSRS) show a composition bias toward low complexity. Over residues 197–210 (RAAEVHNLSEKRRR) the composition is skewed to basic and acidic residues. Residues 197–246 (RAAEVHNLSEKRRRSRINEKMKALQSLIPNSNKTDKASMLDEAIEYLKQL) form the bHLH domain.

In terms of assembly, homodimer. Interacts with HEC1, HEC2 and HEC3. Binds to RGL2 and RGA. As to expression, expressed in lateral root caps, young leaves, stipules, maturing pith cells of the stem, differentiating vascular cells, shoot apical meristems and flowers.

It is found in the nucleus. In terms of biological role, transcription factor that plays a role in floral organogenesis. Promotes the growth of carpel margins and of pollen tract tissues derived from them. This chain is Transcription factor SPATULA (SPT), found in Arabidopsis thaliana (Mouse-ear cress).